Consider the following 299-residue polypeptide: Virginiamycin B lyase (299 aa).

A substrate-binding site is contributed by histidine 229. Glutamate 269 provides a ligand contact to Mg(2+). Histidine 271 functions as the Proton acceptor in the catalytic mechanism. Position 286 (glutamate 286) interacts with Mg(2+).

The protein belongs to the Vgb family. Monomer. It depends on Mg(2+) as a cofactor.

Functionally, inactivates the type B streptogramin antibiotics by linearizing the lactone ring at the ester linkage, generating a free phenylglycine carboxylate and converting the threonyl moiety into 2-amino-butenoic acid. The protein is Virginiamycin B lyase (vgb) of Bordetella pertussis (strain Tohama I / ATCC BAA-589 / NCTC 13251).